Here is a 171-residue protein sequence, read N- to C-terminus: 3-hydroxydecanoyl-[acyl-carrier-protein] dehydratase (171 aa).

The active site involves histidine 70.

This sequence belongs to the thioester dehydratase family. FabA subfamily. As to quaternary structure, homodimer.

It is found in the cytoplasm. The enzyme catalyses a (3R)-hydroxyacyl-[ACP] = a (2E)-enoyl-[ACP] + H2O. The catalysed reaction is (3R)-hydroxydecanoyl-[ACP] = (2E)-decenoyl-[ACP] + H2O. It catalyses the reaction (2E)-decenoyl-[ACP] = (3Z)-decenoyl-[ACP]. Its pathway is lipid metabolism; fatty acid biosynthesis. Necessary for the introduction of cis unsaturation into fatty acids. Catalyzes the dehydration of (3R)-3-hydroxydecanoyl-ACP to E-(2)-decenoyl-ACP and then its isomerization to Z-(3)-decenoyl-ACP. Can catalyze the dehydratase reaction for beta-hydroxyacyl-ACPs with saturated chain lengths up to 16:0, being most active on intermediate chain length. This Azotobacter vinelandii (strain DJ / ATCC BAA-1303) protein is 3-hydroxydecanoyl-[acyl-carrier-protein] dehydratase.